The following is a 316-amino-acid chain: C-type lectin domain family 10 member A (316 aa).

The Cytoplasmic portion of the chain corresponds to 1–39; sequence MTRTYENFQYLENKVKVQGFKNGPLPLQSLLQRLCSGPC. Residues 5–8 carry the Endocytosis signal motif; sequence YENF. A helical; Signal-anchor for type II membrane protein transmembrane segment spans residues 40–60; it reads HLLLSLGLGLLLLVIICVVGF. Residues 61 to 316 are Extracellular-facing; it reads QNSKFQRDLV…GLGQTSQESH (256 aa). Residues Asn78 and Asn173 are each glycosylated (N-linked (GlcNAc...) asparagine). The stretch at 85-176 forms a coiled coil; it reads AEIQALTSQG…VATLNNNAST (92 aa). 3 disulfide bridges follow: Cys181–Cys192, Cys209–Cys304, and Cys282–Cys296. A C-type lectin domain is found at 188–305; that stretch reads HQDSCYWFSH…CQRPYHWVCE (118 aa). 4 residues coordinate Ca(2+): Val218, Asn220, Glu224, and Asp243. A glycoprotein contacts are provided by Gln267 and Asp269. Asp269, Asp270, Glu280, and Asp281 together coordinate Ca(2+). Glu280 lines the a glycoprotein pocket. Residues His286 and Asn292 each coordinate a glycoprotein. Positions 292, 293, and 305 each coordinate Ca(2+).

Interacts with A-, B- and C-domain containing PTPRC/CD45 isoforms: isoform 1/CD45ABC, isoform 3/CD45AB, isoform 5/CD45BC and isoform 7/CD45B. Does not interact with PTPRC/CD45 isoform 2/CD45RO, a memory T cell marker. As to expression, expressed in myeloid antigen presenting cells in lymph nodes and skin (at protein level). Expressed in dermal dendritic cells (at protein level).

The protein localises to the cell membrane. It is found in the early endosome membrane. Its subcellular location is the lysosome membrane. Functionally, C-type lectin receptor involved in recognition of N-acetylgalactosamine (GalNAc)-terminated glycans by myeloid antigen presenting cells (APCs). Binds in a Ca(2+)-dependent manner to alpha- and beta-linked GalNAc residues on glycoprotein and glycolipid antigens, including alphaGalNAc- and Galbeta1-&gt;3GalNAc-O-Ser/Thr also known as Tn and T antigens, LacdiNAc epitope GalNAcbeta1-&gt;4GlcNAc and its derivative GalNAcbeta1-&gt;4-(Fucalpha1-&gt;3)GlcNAc, O-linked core 5 and 6 glycans, and GM2 and GD2 gangliosides. Acts as a signaling receptor at the interface of APC-T cell interactions. On immature dendritic cells, recognizes Tn antigen-carrying PTPRC/CD45 receptor on effector T cells and downregulates PTRPN/CD45 phosphatase activity with an impact on T cell activation threshold, cytokine production and proliferation. Modulates dendritic cell maturation toward a tolerogenic phenotype leading to generation of regulatory CD4-positive T cell subset with immune suppressive functions. Acts as an endocytic pattern recognition receptor involved in antitumor immunity. During tumorigenesis, recognizes Tn antigens and its sialylated forms Neu5Ac-Tn and Neu5Gc-Tn expressed on tumor cell mucins. On immature dendritic cells, can internalize Tn-terminated immunogens and target them to endolysosomal compartment for MHC class I and II antigen presentation to CD8-positive and CD4-positive T cells, respectively. The polypeptide is C-type lectin domain family 10 member A (Homo sapiens (Human)).